The following is a 420-amino-acid chain: Putative kinase Y4mE (420 aa).

The active-site Proton acceptor is Asp-302.

This sequence belongs to the HipA Ser/Thr kinase family.

This Sinorhizobium fredii (strain NBRC 101917 / NGR234) protein is Putative kinase Y4mE.